The chain runs to 121 residues: HTH-type transcriptional regulator Rv1152 (121 aa).

One can recognise an HTH gntR-type domain in the interval 15-83 (KPLFDQLRTQ…GRFGTFISRF (69 aa)). The H-T-H motif DNA-binding region spans 43 to 62 (VRDLAGQLGVAANTVARAYR).

Its subcellular location is the cytoplasm. The protein resides in the secreted. It localises to the cell wall. In terms of biological role, transcriptional regulator that modulates resistance to vancomycin and aminoglycosides. Negatively regulates the expression of several genes responsive to vancomycin, resulting in decreased susceptibility of bacteria to vancomycin. Negatively regulates the expression of genes encoding the ribosome binding protein Hsp, the small subunit of sulfate adenylyltransferase CysD, the L-lysine-epsilon aminotransferase LAT and the protease HtpX. Also modulates purine metabolism and aminoglycoside antibiotic resistance. Negatively regulates the expression of purine metabolism-related genes and the accumulation of purine metabolites, which affects aminoglycoside antibiotic resistance. The polypeptide is HTH-type transcriptional regulator Rv1152 (Mycobacterium tuberculosis (strain ATCC 25618 / H37Rv)).